Consider the following 76-residue polypeptide: Acyl carrier protein (76 aa).

A Carrier domain is found at 1-76 (MAIFDDIKEV…DVVRYIETNK (76 aa)). S36 bears the O-(pantetheine 4'-phosphoryl)serine mark.

It belongs to the acyl carrier protein (ACP) family. 4'-phosphopantetheine is transferred from CoA to a specific serine of apo-ACP by AcpS. This modification is essential for activity because fatty acids are bound in thioester linkage to the sulfhydryl of the prosthetic group.

The protein resides in the cytoplasm. The protein operates within lipid metabolism; fatty acid biosynthesis. In terms of biological role, carrier of the growing fatty acid chain in fatty acid biosynthesis. In Wolinella succinogenes (strain ATCC 29543 / DSM 1740 / CCUG 13145 / JCM 31913 / LMG 7466 / NCTC 11488 / FDC 602W) (Vibrio succinogenes), this protein is Acyl carrier protein.